The chain runs to 890 residues: Alanine--tRNA ligase (890 aa).

4 residues coordinate Zn(2+): H572, H576, C674, and H678.

It belongs to the class-II aminoacyl-tRNA synthetase family. Zn(2+) is required as a cofactor.

Its subcellular location is the cytoplasm. It catalyses the reaction tRNA(Ala) + L-alanine + ATP = L-alanyl-tRNA(Ala) + AMP + diphosphate. Functionally, catalyzes the attachment of alanine to tRNA(Ala) in a two-step reaction: alanine is first activated by ATP to form Ala-AMP and then transferred to the acceptor end of tRNA(Ala). Also edits incorrectly charged Ser-tRNA(Ala) and Gly-tRNA(Ala) via its editing domain. The sequence is that of Alanine--tRNA ligase from Saccharopolyspora erythraea (strain ATCC 11635 / DSM 40517 / JCM 4748 / NBRC 13426 / NCIMB 8594 / NRRL 2338).